The sequence spans 398 residues: Tyrosine--tRNA ligase (398 aa).

Residues 42-51 (PTAPDLHLGH) carry the 'HIGH' region motif. Residues 226 to 230 (KMSKS) carry the 'KMSKS' region motif. Lysine 229 serves as a coordination point for ATP. The 57-residue stretch at 341 to 397 (AFLEAAGLVKSRGEAKRLIKEGALSVDGVRCDDANSPLASGEYVIKLGKKRFLRLTV) folds into the S4 RNA-binding domain.

The protein belongs to the class-I aminoacyl-tRNA synthetase family. TyrS type 2 subfamily. In terms of assembly, homodimer.

The protein resides in the cytoplasm. The catalysed reaction is tRNA(Tyr) + L-tyrosine + ATP = L-tyrosyl-tRNA(Tyr) + AMP + diphosphate + H(+). Functionally, catalyzes the attachment of tyrosine to tRNA(Tyr) in a two-step reaction: tyrosine is first activated by ATP to form Tyr-AMP and then transferred to the acceptor end of tRNA(Tyr). This Nitratidesulfovibrio vulgaris (strain ATCC 29579 / DSM 644 / CCUG 34227 / NCIMB 8303 / VKM B-1760 / Hildenborough) (Desulfovibrio vulgaris) protein is Tyrosine--tRNA ligase.